The following is a 239-amino-acid chain: MTEAATGPEGADPSRAARSLPGRPPGIRADSSGLTDRQRRVIEVIRDSVQRRGYPPSMREIGQAVGLSSTSSVAHQLMALERKGFLRRDPHRPRAYEVRGSDQPSAQPADTSGKPAASYVPLVGRIAAGGPILAEESVEDVFPLPRQLVGDGELFVLKVVGDSMIEAAICDGDWVTVRRQPVAENGDIVAAMLDGEATVKRFKRENGHVWLLPHNAAYQPIPGDDATILGKVVAVLRRV.

The interval 1 to 40 (MTEAATGPEGADPSRAARSLPGRPPGIRADSSGLTDRQRR) is disordered. The H-T-H motif DNA-binding region spans 58 to 78 (MREIGQAVGLSSTSSVAHQLM). Positions 89 to 100 (DPHRPRAYEVRG) are enriched in basic and acidic residues. The segment at 89–116 (DPHRPRAYEVRGSDQPSAQPADTSGKPA) is disordered. Catalysis depends on for autocatalytic cleavage activity residues S163 and K200.

This sequence belongs to the peptidase S24 family. Homodimer.

The catalysed reaction is Hydrolysis of Ala-|-Gly bond in repressor LexA.. In terms of biological role, represses a number of genes involved in the response to DNA damage (SOS response), including recA and lexA. In the presence of single-stranded DNA, RecA interacts with LexA causing an autocatalytic cleavage which disrupts the DNA-binding part of LexA, leading to derepression of the SOS regulon and eventually DNA repair. In Streptomyces clavuligerus, this protein is LexA repressor.